A 548-amino-acid chain; its full sequence is Sesquiterpene synthase 12 (548 aa).

Mg(2+) is bound by residues Asp299, Asp303, Asp444, and Glu452. The short motif at 299 to 303 (DDTFD) is the DDXXD motif element.

Belongs to the terpene synthase family. Tpsa subfamily. Mg(2+) serves as cofactor. The cofactor is Mn(2+). Mostly expressed in leaves, to a lower extent in stems, trichomes, flowers and roots and, at low levels, in fruits.

The catalysed reaction is (2E,6E)-farnesyl diphosphate = alpha-humulene + diphosphate. The enzyme catalyses (2E,6E)-farnesyl diphosphate = (-)-(E)-beta-caryophyllene + diphosphate. It catalyses the reaction (2Z,6Z)-farnesyl diphosphate = beta-bisabolene + diphosphate. It carries out the reaction (2E)-geranyl diphosphate = terpinolene + diphosphate. The catalysed reaction is (2E)-geranyl diphosphate = limonene + diphosphate. The enzyme catalyses (2E)-geranyl diphosphate = beta-myrcene + diphosphate. It catalyses the reaction (2E)-geranyl diphosphate = (E)-beta-ocimene + diphosphate. It carries out the reaction (2Z,6Z)-farnesyl diphosphate = gamma-curcumene + diphosphate. The catalysed reaction is (2Z,6Z)-farnesyl diphosphate = (Z)-gamma-bisabolene + diphosphate. The protein operates within secondary metabolite biosynthesis; terpenoid biosynthesis. Functionally, sesquiterpene synthase involved in the biosynthesis of volatile compounds. Mediates the conversion of (2E,6E)-farnesyl diphosphate (FPP) into (1E,4E,8E)-alpha-humulene and (-)-(E)-beta-caryophyllene, and of (2Z,6Z)-farnesyl diphosphate ((ZZ)-FPP) into beta-bisabolene, gamma-curcumene and (Z)-gamma-bisabolene. Can act with a low efficiency as a monoterpene synthase with geranyl diphosphate (GPP) as substrate, thus producing beta-myrcene, (E)-beta-ocimene, limonene and terpinolene. The polypeptide is Sesquiterpene synthase 12 (Solanum lycopersicum (Tomato)).